Consider the following 628-residue polypeptide: Phosphomethylpyrimidine synthase (628 aa).

Residues 1–14 (MTISDIGSQATTHT) show a composition bias toward polar residues. The disordered stretch occupies residues 1–37 (MTISDIGSQATTHTPVKASKADALKTPAHRSETDARF). The span at 19-37 (SKADALKTPAHRSETDARF) shows a compositional bias: basic and acidic residues. Substrate-binding positions include asparagine 260, methionine 289, tyrosine 318, histidine 354, 374–376 (SRG), 415–418 (DGLR), and glutamate 454. Histidine 458 serves as a coordination point for Zn(2+). Tyrosine 481 contacts substrate. Zn(2+) is bound at residue histidine 522. [4Fe-4S] cluster-binding residues include cysteine 602, cysteine 605, and cysteine 610.

Belongs to the ThiC family. Homodimer. It depends on [4Fe-4S] cluster as a cofactor.

It catalyses the reaction 5-amino-1-(5-phospho-beta-D-ribosyl)imidazole + S-adenosyl-L-methionine = 4-amino-2-methyl-5-(phosphooxymethyl)pyrimidine + CO + 5'-deoxyadenosine + formate + L-methionine + 3 H(+). It functions in the pathway cofactor biosynthesis; thiamine diphosphate biosynthesis. Its function is as follows. Catalyzes the synthesis of the hydroxymethylpyrimidine phosphate (HMP-P) moiety of thiamine from aminoimidazole ribotide (AIR) in a radical S-adenosyl-L-methionine (SAM)-dependent reaction. The chain is Phosphomethylpyrimidine synthase from Psychrobacter cryohalolentis (strain ATCC BAA-1226 / DSM 17306 / VKM B-2378 / K5).